The primary structure comprises 405 residues: LanC-like protein GCL2 (405 aa).

Residues Cys-278, Cys-323, and His-324 each contribute to the Zn(2+) site.

This sequence belongs to the LanC-like protein family.

May play a role in signaling. May be not involved in abscisic acid (ABA) signaling. The sequence is that of LanC-like protein GCL2 (GCL2) from Arabidopsis thaliana (Mouse-ear cress).